The sequence spans 241 residues: Ras-like protein 1 (241 aa).

GTP-binding positions include 17–22, 33–39, 63–64, 138–141, and 168–170; these read GVGKTA, VETYDPT, AG, NKSD, and SAK. The Effector region motif lies at 36–44; that stretch reads YDPTIEDSY. The interval 190 to 241 is disordered; that stretch reads RQQASRPSLPGNSRTKTGGMGKSESFYQSDGKRGSRKDGEKHRSKPIKCVIL. The segment covering 191 to 205 has biased composition (polar residues); sequence QQASRPSLPGNSRTK. A compositionally biased stretch (basic and acidic residues) spans 219-230; that stretch reads DGKRGSRKDGEK. Cysteine 238 carries the cysteine methyl ester modification. Cysteine 238 carries the S-farnesyl cysteine lipid modification. Positions 239–241 are cleaved as a propeptide — removed in mature form; it reads VIL.

The protein belongs to the small GTPase superfamily. Ras family. As to quaternary structure, interacts with farnesyltransferase beta subunit RAM1.

It is found in the cell membrane. Alternates between an inactive form bound to GDP and an active form bound to GTP. Activated by a guanine nucleotide-exchange factor (GEF) and inactivated by a GTPase-activating protein (GAP). In terms of biological role, modulates the activity of the adenylate cyclase catalytic subunit and therefore affects the biosynthesis of cyclic-AMP. Plays a role in both surface attachment and surface recognition of appressoria, a highly specialized infection structure for plant penetration. Regulates appressorium formation by coordinated regulation of cAMP signaling and Pmk1 MAPK pathways. The protein is Ras-like protein 1 of Pyricularia oryzae (strain 70-15 / ATCC MYA-4617 / FGSC 8958) (Rice blast fungus).